Consider the following 386-residue polypeptide: Cystathionine gamma-synthase (386 aa).

Lys198 is subject to N6-(pyridoxal phosphate)lysine.

It belongs to the trans-sulfuration enzymes family. Homotetramer. Pyridoxal 5'-phosphate serves as cofactor.

It localises to the cytoplasm. It catalyses the reaction O-succinyl-L-homoserine + L-cysteine = L,L-cystathionine + succinate + H(+). Its pathway is amino-acid biosynthesis; L-methionine biosynthesis via de novo pathway; L-cystathionine from O-succinyl-L-homoserine: step 1/1. Its function is as follows. Catalyzes the formation of L-cystathionine from O-succinyl-L-homoserine (OSHS) and L-cysteine, via a gamma-replacement reaction. In the absence of thiol, catalyzes gamma-elimination to form 2-oxobutanoate, succinate and ammonia. The polypeptide is Cystathionine gamma-synthase (metB) (Escherichia coli (strain K12)).